The chain runs to 212 residues: 3-isopropylmalate dehydratase small subunit (212 aa).

The protein belongs to the LeuD family. LeuD type 1 subfamily. Heterodimer of LeuC and LeuD.

It carries out the reaction (2R,3S)-3-isopropylmalate = (2S)-2-isopropylmalate. It functions in the pathway amino-acid biosynthesis; L-leucine biosynthesis; L-leucine from 3-methyl-2-oxobutanoate: step 2/4. Its function is as follows. Catalyzes the isomerization between 2-isopropylmalate and 3-isopropylmalate, via the formation of 2-isopropylmaleate. In Beutenbergia cavernae (strain ATCC BAA-8 / DSM 12333 / CCUG 43141 / JCM 11478 / NBRC 16432 / NCIMB 13614 / HKI 0122), this protein is 3-isopropylmalate dehydratase small subunit.